The sequence spans 1758 residues: Y' element ATP-dependent helicase YIL177C (1758 aa).

Positions 668 to 845 constitute a Helicase ATP-binding domain; the sequence is EIYMADTPSV…LQRIGLTGLA (178 aa). An ATP-binding site is contributed by 681–688; that stretch reads APPGYGKT. The 152-residue stretch at 900 to 1051 folds into the Helicase C-terminal domain; sequence ALKLLLALFE…EFYGLESKKG (152 aa). Low complexity predominate over residues 1142–1360; that stretch reads NVRTNATTNA…ATTTESTNAS (219 aa). The interval 1142 to 1384 is disordered; that stretch reads NVRTNATTNA…RFHPVTDINK (243 aa). A compositionally biased stretch (basic and acidic residues) spans 1361 to 1384; it reads AKEDANKDGNAEDNRFHPVTDINK.

Belongs to the helicase family. Yeast subtelomeric Y' repeat subfamily.

Catalyzes DNA unwinding and is involved in telomerase-independent telomere maintenance. The protein is Y' element ATP-dependent helicase YIL177C of Saccharomyces cerevisiae (strain ATCC 204508 / S288c) (Baker's yeast).